Consider the following 135-residue polypeptide: Small ribosomal subunit protein uS11 (135 aa).

Belongs to the universal ribosomal protein uS11 family. As to quaternary structure, part of the 30S ribosomal subunit. Interacts with proteins S7 and S18. Binds to IF-3.

Its function is as follows. Located on the platform of the 30S subunit, it bridges several disparate RNA helices of the 16S rRNA. Forms part of the Shine-Dalgarno cleft in the 70S ribosome. The polypeptide is Small ribosomal subunit protein uS11 (Cutibacterium acnes (strain DSM 16379 / KPA171202) (Propionibacterium acnes)).